Consider the following 463-residue polypeptide: Cysteine--tRNA ligase (463 aa).

A Zn(2+)-binding site is contributed by Cys-27. A 'HIGH' region motif is present at residues 29–39 (MTVYDYCHLGH). Residues Cys-208, His-233, and Glu-237 each coordinate Zn(2+). A 'KMSKS' region motif is present at residues 265–269 (KMSKS). Lys-268 is an ATP binding site.

Belongs to the class-I aminoacyl-tRNA synthetase family. Monomer. Requires Zn(2+) as cofactor.

It localises to the cytoplasm. The enzyme catalyses tRNA(Cys) + L-cysteine + ATP = L-cysteinyl-tRNA(Cys) + AMP + diphosphate. The sequence is that of Cysteine--tRNA ligase from Marinobacter nauticus (strain ATCC 700491 / DSM 11845 / VT8) (Marinobacter aquaeolei).